The chain runs to 585 residues: Arginine--tRNA ligase (585 aa).

The 'HIGH' region signature appears at 126–136 (PNIAKEMHVGH).

The protein belongs to the class-I aminoacyl-tRNA synthetase family. As to quaternary structure, monomer.

The protein localises to the cytoplasm. The enzyme catalyses tRNA(Arg) + L-arginine + ATP = L-arginyl-tRNA(Arg) + AMP + diphosphate. The protein is Arginine--tRNA ligase of Cyanothece sp. (strain PCC 7425 / ATCC 29141).